The primary structure comprises 187 residues: Ribosome-recycling factor (187 aa).

Belongs to the RRF family.

It localises to the cytoplasm. Its function is as follows. Responsible for the release of ribosomes from messenger RNA at the termination of protein biosynthesis. May increase the efficiency of translation by recycling ribosomes from one round of translation to another. The polypeptide is Ribosome-recycling factor (Methylobacterium radiotolerans (strain ATCC 27329 / DSM 1819 / JCM 2831 / NBRC 15690 / NCIMB 10815 / 0-1)).